A 368-amino-acid chain; its full sequence is Forkhead box protein I2 (368 aa).

Residues 33-54 (QNQQLPQRPAAPPALGYGRNEY) form a disordered region. Positions 124–218 (RPPYSYSSLI…DNGNFRRKRK (95 aa)) form a DNA-binding region, fork-head. A disordered region spans residues 243-272 (SLGSDSPRGASALEQSSYGTPESKSRPAGG). A compositionally biased stretch (polar residues) spans 255-264 (LEQSSYGTPE).

The protein localises to the nucleus. Possible transcriptional activator. The sequence is that of Forkhead box protein I2 from Xenopus tropicalis (Western clawed frog).